We begin with the raw amino-acid sequence, 721 residues long: Pentatricopeptide repeat-containing protein At3g49710 (721 aa).

PPR repeat units lie at residues 42-72 (STYL…TEEP), 73-103 (NVFS…IPQP), 104-138 (DTVS…GFEV), 139-169 (DGFT…SGGF), 172-202 (YSSV…MDEL), 204-238 (DEVS…GFKI), 239-273 (DMFT…GFHQ), 274-307 (NSHV…ILSP), 308-343 (DLVV…GHRP), 344-378 (DDCS…HIPS), 380-410 (RISV…MPEL), 411-445 (NAVS…GIAP), 446-476 (NKIT…MKET), and 482-512 (EAEH…MPYK). The type E motif stretch occupies residues 517–592 (AWAALLGACR…KPGCSWIEVK (76 aa)). Residues 593 to 623 (KKKHVFVAEDWSHPMIREVNEYLEEMMKKMK) form a type E(+) motif region. The tract at residues 624 to 721 (KVGYVMDKKW…DGKCSCGDYW (98 aa)) is type DYW motif.

Belongs to the PPR family. PCMP-H subfamily.

The chain is Pentatricopeptide repeat-containing protein At3g49710 (PCMP-H79) from Arabidopsis thaliana (Mouse-ear cress).